A 107-amino-acid polypeptide reads, in one-letter code: DNA-directed RNA polymerase subunit omega (107 aa).

A disordered region spans residues 81–107 (MEEEAAKGNADAGQGEGDAPKTPGQDG).

It belongs to the RNA polymerase subunit omega family. The RNAP catalytic core consists of 2 alpha, 1 beta, 1 beta' and 1 omega subunit. When a sigma factor is associated with the core the holoenzyme is formed, which can initiate transcription.

The enzyme catalyses RNA(n) + a ribonucleoside 5'-triphosphate = RNA(n+1) + diphosphate. Promotes RNA polymerase assembly. Latches the N- and C-terminal regions of the beta' subunit thereby facilitating its interaction with the beta and alpha subunits. The protein is DNA-directed RNA polymerase subunit omega of Alkalilimnicola ehrlichii (strain ATCC BAA-1101 / DSM 17681 / MLHE-1).